Reading from the N-terminus, the 516-residue chain is Nucleolar complex protein 4 homolog (516 aa).

Transmembrane regions (helical) follow at residues 297–317, 347–367, and 375–395; these read ACDL…ILIH, FFHL…LVAA, and LALT…CNLL.

This sequence belongs to the CBF/MAK21 family.

The protein resides in the nucleus membrane. Its subcellular location is the nucleus. The protein localises to the nucleolus. The sequence is that of Nucleolar complex protein 4 homolog (NOC4L) from Homo sapiens (Human).